We begin with the raw amino-acid sequence, 213 residues long: Holliday junction branch migration complex subunit RuvA (213 aa).

The segment at 1-64 (MIASVTGEVA…DEAPLLFGFA (64 aa)) is domain I. Residues 65–143 (QGDEKEIFTV…LPEPPVQQAN (79 aa)) are domain II. Positions 144–152 (QPQVPVWRD) are flexible linker. Residues 152–213 (DQVVDALTGL…GTTHAPTGRR (62 aa)) are domain III.

It belongs to the RuvA family. As to quaternary structure, homotetramer. Forms an RuvA(8)-RuvB(12)-Holliday junction (HJ) complex. HJ DNA is sandwiched between 2 RuvA tetramers; dsDNA enters through RuvA and exits via RuvB. An RuvB hexamer assembles on each DNA strand where it exits the tetramer. Each RuvB hexamer is contacted by two RuvA subunits (via domain III) on 2 adjacent RuvB subunits; this complex drives branch migration. In the full resolvosome a probable DNA-RuvA(4)-RuvB(12)-RuvC(2) complex forms which resolves the HJ.

It is found in the cytoplasm. Its function is as follows. The RuvA-RuvB-RuvC complex processes Holliday junction (HJ) DNA during genetic recombination and DNA repair, while the RuvA-RuvB complex plays an important role in the rescue of blocked DNA replication forks via replication fork reversal (RFR). RuvA specifically binds to HJ cruciform DNA, conferring on it an open structure. The RuvB hexamer acts as an ATP-dependent pump, pulling dsDNA into and through the RuvAB complex. HJ branch migration allows RuvC to scan DNA until it finds its consensus sequence, where it cleaves and resolves the cruciform DNA. This chain is Holliday junction branch migration complex subunit RuvA, found in Kocuria rhizophila (strain ATCC 9341 / DSM 348 / NBRC 103217 / DC2201).